Reading from the N-terminus, the 418-residue chain is MLSPTNSISKTAPVPPQDSSKPVLISEEPQNQLLQKVARTALAVLLVVVTLGLILLFYSFSDLQSFPWCCQTRPSTKEQPTISIPVPLPSPPLAVPRPSTPPPPVISRPSTPPAPTPAISPPSTPSAPKPSTPPPLPPKAPKPVKTQEDLLPFVPEQVFVEMYEDMARRRIIEALVPAWDSDIIFKCLCYFHTLYPGLIPLETFPPATIFNFKQKIISILEDKKAVLRGEPIKGSLPICCSEENYRRHLQGTTLLPVFMWYHPTPKTLSDTMQTMKQLAIKGSVGASHWLLVIVDIQARRLVYFDSLYNYVMSPEDMKKDLQSFAQQLDQVYPAYDSQIFSVKIAAKEVIQKGSGSSCGAWCCQFLHWYLRDPFTDALNDLPVDSVERHENLASFVQACEAAVQDLPELFWPEAKALF.

Polar residues predominate over residues Met-1–Lys-10. The segment at Met-1 to Val-23 is disordered. A helical transmembrane segment spans residues Thr-40 to Phe-60. A disordered region spans residues Thr-72 to Val-144. Residues Val-86–Pro-141 show a composition bias toward pro residues. Catalysis depends on residues His-288, Asp-305, and Cys-358.

It belongs to the peptidase C48 family.

It localises to the secreted. The protein localises to the host cell. It is found in the membrane. Functionally, effector proteins function to alter host cell physiology and promote bacterial survival in host tissues. This protease possesses deubiquitinating and deneddylating activities. The chain is Deubiquitinase and deneddylase Dub1 (cdu1) from Chlamydia trachomatis serovar B (strain Jali20/OT).